The sequence spans 233 residues: tRNA (guanine-N(7)-)-methyltransferase (233 aa).

The segment at 1–22 (MIDENHPMRAAGNFFGRRHGKP) is disordered. S-adenosyl-L-methionine-binding residues include E64, E89, D116, and D138. D138 is an active-site residue. Substrate is bound by residues K142, D174, and 212 to 215 (TRYE).

It belongs to the class I-like SAM-binding methyltransferase superfamily. TrmB family.

The enzyme catalyses guanosine(46) in tRNA + S-adenosyl-L-methionine = N(7)-methylguanosine(46) in tRNA + S-adenosyl-L-homocysteine. It participates in tRNA modification; N(7)-methylguanine-tRNA biosynthesis. Catalyzes the formation of N(7)-methylguanine at position 46 (m7G46) in tRNA. This Brucella abortus (strain 2308) protein is tRNA (guanine-N(7)-)-methyltransferase.